The following is a 1196-amino-acid chain: FIP1[V]-like protein (1196 aa).

5 disordered regions span residues 1–102, 117–248, 268–300, 413–472, and 485–1174; these read MEED…TIPG, GVSQ…SHGY, GAAS…WRPL, GAQG…PRMR, and SHED…IEGP. A compositionally biased stretch (pro residues) spans 18–31; the sequence is FQPPVVLPPPPPLP. Polar residues predominate over residues 117–126; the sequence is GVSQVTTRIE. Residues 129 to 141 show a composition bias toward gly residues; that stretch reads VGGGGDGGYGGQG. 2 stretches are compositionally biased toward acidic residues: residues 142 to 154 and 179 to 190; these read EGDD…EDDL and NEDDDDEDDEDP. The segment covering 226-236 has biased composition (gly residues); the sequence is AGKGSGPGGAT. Residues 268–278 show a composition bias toward low complexity; sequence GAASVGGPSSG. Basic and acidic residues predominate over residues 518–548; that stretch reads KRPDTESAEHSPAQDEPHKNLLKKQDDEISR. Positions 549 to 561 are enriched in polar residues; sequence STDSGQSFRSSSP. Basic and acidic residues-rich tracts occupy residues 565–592 and 608–641; these read RGTR…EELK and GESK…DKHS. Residues 643–657 are compositionally biased toward polar residues; it reads RPANNRKQYDNNAPH. Composition is skewed to basic and acidic residues over residues 661–673, 699–802, 810–918, 925–945, and 953–971; these read KNQD…ERTR, SRED…EKNE, SMSR…DTLR, RRDY…DFSA, and NEKK…KFID. 2 short sequence motifs (nuclear localization signal) span residues 704–711 and 734–741; these read DKRKERDV and RKRDREDD. Residues 998 to 1021 are compositionally biased toward polar residues; sequence ESLSKQGEQNGSSVVTGSKGTNDA. 3 stretches are compositionally biased toward basic and acidic residues: residues 1046-1071, 1103-1137, and 1151-1163; these read DEIH…EDAV, KSRD…TVEK, and TEKD…KMES.

This sequence belongs to the FIP1 family. Component of the cleavage and polyadenylation specificity factor (CPSF) complex. Forms a complex with cleavage and polyadenylation specificity factor (CPSF) subunits CFIS1, CFIS2, CPSF30, CSTF50, CSTF64, CSTF77, FIPS3, PABN1, PABN2, PABN3, PAPS4, CFIM25 and PABN1. Binds RNA. As to expression, expressed in leaves, stems, flower tissues and roots.

Its subcellular location is the nucleus. In terms of biological role, essential gene. Component of the cleavage and polyadenylation specificity factor (CPSF) complex that plays a key role in pre-mRNA 3'-end formation, recognizing the AAUAAA signal sequence and interacting with poly(A) polymerase and other factors to bring about cleavage and poly(A) addition. FIP1L1 contributes to poly(A) site recognition and stimulates poly(A) addition. Binds to U-rich RNA sequence elements surrounding the poly(A) site. May act to tether poly(A) polymerase to the CPSF complex. The protein is FIP1[V]-like protein of Arabidopsis thaliana (Mouse-ear cress).